The chain runs to 799 residues: High affinity nerve growth factor receptor (799 aa).

An N-terminal signal peptide occupies residues 1-32 (MLRGQRHGQLGWHRPAAGLGGLVTSLMLACAC). Residues 33–418 (AASCRETCCP…DPVEKKDETP (386 aa)) lie on the Extracellular side of the membrane. 2 disulfides stabilise this stretch: Cys-36-Cys-41 and Cys-40-Cys-50. Asn-67 carries an N-linked (GlcNAc...) asparagine glycan. LRR repeat units follow at residues 90–113 (LGEL…AFHF) and 116–137 (RLSH…TVQG). N-linked (GlcNAc...) asparagine glycosylation is found at Asn-121, Asn-190, Asn-204, Asn-255, Asn-264, Asn-320, Asn-325, Asn-341, Asn-361, and Asn-404. Residues 148-219 (NPLHCSCALL…GDDVFLQCQV (72 aa)) form the LRRCT domain. Cys-154 and Cys-193 are disulfide-bonded. 2 Ig-like C2-type domains span residues 196–285 (PSVK…VSVS) and 295–368 (AVEQ…LAAN). Disulfide bonds link Cys-217–Cys-267 and Cys-302–Cys-348. Residues 419 to 442 (FGVSVAVGLAVSAALFLSALLLVL) form a helical membrane-spanning segment. At 443–799 (NKCGQRSKFG…APPSYLDVLG (357 aa)) the chain is on the cytoplasmic side. Residues 472 to 493 (MTLGGSSLSPTEGKGSGLQGHI) form an interaction with SQSTM1 region. At Tyr-499 the chain carries Phosphotyrosine; by autocatalysis. Residues 513–784 (IILKWELGEG…LSMKDVHARL (272 aa)) form the Protein kinase domain. Residues 519–527 (LGEGAFGKV) and Lys-547 contribute to the ATP site. Residue Asp-653 is the Proton acceptor of the active site. Residues Tyr-679, Tyr-683, Tyr-684, and Tyr-794 each carry the phosphotyrosine; by autocatalysis modification.

This sequence belongs to the protein kinase superfamily. Tyr protein kinase family. Insulin receptor subfamily. Exists in a dynamic equilibrium between monomeric (low affinity) and dimeric (high affinity) structures. Homodimerization is induced by binding of a NGF dimer. Found in a complex, at least composed of KIDINS220, MAGI2, NTRK1 and RAPGEF2; the complex is mainly formed at late endosomes in a nerve growth factor (NGF)-dependent manner. Interacts with RAPGEF2; the interaction is strengthened after NGF stimulation. Interacts with SQSTM1; bridges NTRK1 to NGFR. Forms a ternary complex with NGFR and KIDINS220; this complex is affected by the expression levels of KIDINS220 and an increase in KIDINS220 expression leads to a decreased association of NGFR and NTRK1. Interacts (phosphorylated upon activation by NGF) with SHC1; mediates SHC1 phosphorylation and activation. Interacts (phosphorylated upon activation by NGF) with PLCG1; mediates PLCG1 phosphorylation and activation. Interacts (phosphorylated) with SH2B1 and SH2B2. Interacts with GRB2. Interacts with PIK3R1. Interacts with FRS2. Interacts with SORT1; may regulate NTRK1 anterograde axonal transport. Interacts with SH2D1A; regulates NTRK1. Interacts with NRADD. Interacts with RAB7A. Interacts with PTPRS. Interacts with USP36; USP36 does not deubiquitinate NTRK1. Interacts with GGA3. Interacts with TSPAN1; this interaction promotes NTRK1 stability. Ligand-mediated autophosphorylation. Interaction with SQSTM1 is phosphotyrosine-dependent. Autophosphorylation at Tyr-499 mediates interaction and phosphorylation of SHC1. Post-translationally, N-glycosylated. In terms of processing, ubiquitinated. Undergoes polyubiquitination upon activation; regulated by NGFR. Ubiquitination by NEDD4L leads to degradation. Ubiquitination regulates the internalization of the receptor. As to expression, isoform Trka-II is primarily expressed in neuronal cells; isoform Trka-I is found in non-neuronal tissues.

Its subcellular location is the cell membrane. It is found in the early endosome membrane. The protein resides in the late endosome membrane. The protein localises to the recycling endosome membrane. The catalysed reaction is L-tyrosyl-[protein] + ATP = O-phospho-L-tyrosyl-[protein] + ADP + H(+). Its activity is regulated as follows. The pro-survival signaling effect of NTRK1 in neurons requires its endocytosis into signaling early endosomes and its retrograde axonal transport. This is regulated by different proteins including CFL1, RAC1 and SORT1. NTF3 is unable to induce this signaling probably due to the lability of the NTF3-NTRK1 complex in endosomes. SH2D1A inhibits the autophosphorylation of the receptor, and alters the recruitment and activation of downstream effectors and signaling cascades. Regulated by NGFR. Its function is as follows. Receptor tyrosine kinase involved in the development and the maturation of the central and peripheral nervous systems through regulation of proliferation, differentiation and survival of sympathetic and nervous neurons. High affinity receptor for NGF which is its primary ligand. Can also bind and be activated by NTF3/neurotrophin-3. However, NTF3 only supports axonal extension through NTRK1 but has no effect on neuron survival. Upon dimeric NGF ligand-binding, undergoes homodimerization, autophosphorylation and activation. Recruits, phosphorylates and/or activates several downstream effectors including SHC1, FRS2, SH2B1, SH2B2 and PLCG1 that regulate distinct overlapping signaling cascades driving cell survival and differentiation. Through SHC1 and FRS2 activates a GRB2-Ras-MAPK cascade that regulates cell differentiation and survival. Through PLCG1 controls NF-Kappa-B activation and the transcription of genes involved in cell survival. Through SHC1 and SH2B1 controls a Ras-PI3 kinase-AKT1 signaling cascade that is also regulating survival. In absence of ligand and activation, may promote cell death, making the survival of neurons dependent on trophic factors. In Rattus norvegicus (Rat), this protein is High affinity nerve growth factor receptor (Ntrk1).